The primary structure comprises 107 residues: Thioredoxin (107 aa).

A Thioredoxin domain is found at 2 to 107; the sequence is DSIVHVTDDS…QLTAFLDSNX (106 aa). Cys32 and Cys35 form a disulfide bridge.

This sequence belongs to the thioredoxin family.

In terms of biological role, participates in various redox reactions through the reversible oxidation of its active center dithiol to a disulfide and catalyzes dithiol-disulfide exchange reactions. The chain is Thioredoxin (trxA) from Allochromatium vinosum (Chromatium vinosum).